The following is an 87-amino-acid chain: MIQENKKTIIDTFKTHENDTGSPEVQIALLTERINHLNEHLKSHKKDFHSRRGLLKMVGKRRNLLNYLKDRDIERYREIIAKLGLRK.

It belongs to the universal ribosomal protein uS15 family. In terms of assembly, part of the 30S ribosomal subunit. Forms a bridge to the 50S subunit in the 70S ribosome, contacting the 23S rRNA.

One of the primary rRNA binding proteins, it binds directly to 16S rRNA where it helps nucleate assembly of the platform of the 30S subunit by binding and bridging several RNA helices of the 16S rRNA. Functionally, forms an intersubunit bridge (bridge B4) with the 23S rRNA of the 50S subunit in the ribosome. The polypeptide is Small ribosomal subunit protein uS15 (Alkaliphilus oremlandii (strain OhILAs) (Clostridium oremlandii (strain OhILAs))).